Here is a 264-residue protein sequence, read N- to C-terminus: Neurexophilin-2 (264 aa).

The signal sequence occupies residues 1 to 22; sequence MRLRPLPLVVVPGLLQLLFCDS. Residues 23–90 form an II region; the sequence is KEVVHATEGL…WDWLANITEI (68 aa). Asn86, Asn139, Asn149, and Asn155 each carry an N-linked (GlcNAc...) asparagine glycan. The III stretch occupies residues 91 to 169; the sequence is QEPLARTKRR…LVPPSKVVEF (79 aa). The tract at residues 170–178 is IV (linker domain); it reads EVSPQSTLE. Residues 179–264 form a v (Cys-rich) region; sequence TKESKSFNCR…HSETPYLSSG (86 aa).

This sequence belongs to the neurexophilin family. In terms of processing, may be proteolytically processed at the boundary between the N-terminal non-conserved and the central conserved domain in neuron-like cells. Expressed in brain and kidney.

It is found in the secreted. May be signaling molecules that resemble neuropeptides and that act by binding to alpha-neurexins and possibly other receptors. The polypeptide is Neurexophilin-2 (NXPH2) (Homo sapiens (Human)).